Consider the following 286-residue polypeptide: 4-hydroxy-3-methylbut-2-enyl diphosphate reductase (286 aa).

C12 serves as a coordination point for [4Fe-4S] cluster. (2E)-4-hydroxy-3-methylbut-2-enyl diphosphate is bound by residues H46 and H79. Residues H46 and H79 each contribute to the dimethylallyl diphosphate site. 2 residues coordinate isopentenyl diphosphate: H46 and H79. C101 contributes to the [4Fe-4S] cluster binding site. Position 129 (H129) interacts with (2E)-4-hydroxy-3-methylbut-2-enyl diphosphate. H129 contacts dimethylallyl diphosphate. Residue H129 coordinates isopentenyl diphosphate. The active-site Proton donor is E131. T169 provides a ligand contact to (2E)-4-hydroxy-3-methylbut-2-enyl diphosphate. C198 contributes to the [4Fe-4S] cluster binding site. The (2E)-4-hydroxy-3-methylbut-2-enyl diphosphate site is built by S226, N228, and S270. S226, N228, and S270 together coordinate dimethylallyl diphosphate. Residues S226, N228, and S270 each coordinate isopentenyl diphosphate.

The protein belongs to the IspH family. Requires [4Fe-4S] cluster as cofactor.

It carries out the reaction isopentenyl diphosphate + 2 oxidized [2Fe-2S]-[ferredoxin] + H2O = (2E)-4-hydroxy-3-methylbut-2-enyl diphosphate + 2 reduced [2Fe-2S]-[ferredoxin] + 2 H(+). It catalyses the reaction dimethylallyl diphosphate + 2 oxidized [2Fe-2S]-[ferredoxin] + H2O = (2E)-4-hydroxy-3-methylbut-2-enyl diphosphate + 2 reduced [2Fe-2S]-[ferredoxin] + 2 H(+). It participates in isoprenoid biosynthesis; dimethylallyl diphosphate biosynthesis; dimethylallyl diphosphate from (2E)-4-hydroxy-3-methylbutenyl diphosphate: step 1/1. The protein operates within isoprenoid biosynthesis; isopentenyl diphosphate biosynthesis via DXP pathway; isopentenyl diphosphate from 1-deoxy-D-xylulose 5-phosphate: step 6/6. Catalyzes the conversion of 1-hydroxy-2-methyl-2-(E)-butenyl 4-diphosphate (HMBPP) into a mixture of isopentenyl diphosphate (IPP) and dimethylallyl diphosphate (DMAPP). Acts in the terminal step of the DOXP/MEP pathway for isoprenoid precursor biosynthesis. The chain is 4-hydroxy-3-methylbut-2-enyl diphosphate reductase from Solidesulfovibrio magneticus (strain ATCC 700980 / DSM 13731 / RS-1) (Desulfovibrio magneticus).